A 164-amino-acid chain; its full sequence is Phosphopantetheine adenylyltransferase (164 aa).

Ser9 contacts substrate. ATP is bound by residues 9–10 (SF) and His17. Residues Lys41, Ala78, and Arg92 each contribute to the substrate site. Residues 93–95 (GLR), Glu103, and 128–134 (SRPITAT) contribute to the ATP site.

It belongs to the bacterial CoaD family. Homohexamer. Mg(2+) is required as a cofactor.

It localises to the cytoplasm. The enzyme catalyses (R)-4'-phosphopantetheine + ATP + H(+) = 3'-dephospho-CoA + diphosphate. Its pathway is cofactor biosynthesis; coenzyme A biosynthesis; CoA from (R)-pantothenate: step 4/5. Reversibly transfers an adenylyl group from ATP to 4'-phosphopantetheine, yielding dephospho-CoA (dPCoA) and pyrophosphate. The protein is Phosphopantetheine adenylyltransferase of Allorhizobium ampelinum (strain ATCC BAA-846 / DSM 112012 / S4) (Agrobacterium vitis (strain S4)).